The following is a 344-amino-acid chain: Anthranilate phosphoribosyltransferase (344 aa).

Residues glycine 80, 83–84, threonine 88, 90–93, 108–116, and serine 120 each bind 5-phospho-alpha-D-ribose 1-diphosphate; these read GD, NVST, and KHGNRSVSS. Glycine 80 contacts anthranilate. Serine 92 is a binding site for Mg(2+). Position 111 (asparagine 111) interacts with anthranilate. Arginine 166 contributes to the anthranilate binding site. Mg(2+) is bound by residues aspartate 225 and glutamate 226.

The protein belongs to the anthranilate phosphoribosyltransferase family. In terms of assembly, homodimer. Requires Mg(2+) as cofactor.

It carries out the reaction N-(5-phospho-beta-D-ribosyl)anthranilate + diphosphate = 5-phospho-alpha-D-ribose 1-diphosphate + anthranilate. Its pathway is amino-acid biosynthesis; L-tryptophan biosynthesis; L-tryptophan from chorismate: step 2/5. In terms of biological role, catalyzes the transfer of the phosphoribosyl group of 5-phosphorylribose-1-pyrophosphate (PRPP) to anthranilate to yield N-(5'-phosphoribosyl)-anthranilate (PRA). This chain is Anthranilate phosphoribosyltransferase, found in Legionella pneumophila (strain Paris).